Consider the following 222-residue polypeptide: Phosphoglycolate phosphatase (222 aa).

The Nucleophile role is filled by Asp8. Positions 8 and 10 each coordinate Mg(2+). Lys150 serves as a coordination point for substrate. Mg(2+) contacts are provided by Asp173 and Asp177.

Belongs to the archaeal SPP-like hydrolase family. It depends on Mg(2+) as a cofactor.

The catalysed reaction is 2-phosphoglycolate + H2O = glycolate + phosphate. In terms of biological role, catalyzes the dephosphorylation of 2-phosphoglycolate. The polypeptide is Phosphoglycolate phosphatase (Metallosphaera sedula (strain ATCC 51363 / DSM 5348 / JCM 9185 / NBRC 15509 / TH2)).